The following is a 262-amino-acid chain: Ribosomal RNA small subunit methyltransferase A (262 aa).

S-adenosyl-L-methionine-binding residues include Asn-14, Leu-16, Gly-41, Glu-62, Asp-87, and Asn-109.

It belongs to the class I-like SAM-binding methyltransferase superfamily. rRNA adenine N(6)-methyltransferase family. RsmA subfamily.

Its subcellular location is the cytoplasm. The enzyme catalyses adenosine(1518)/adenosine(1519) in 16S rRNA + 4 S-adenosyl-L-methionine = N(6)-dimethyladenosine(1518)/N(6)-dimethyladenosine(1519) in 16S rRNA + 4 S-adenosyl-L-homocysteine + 4 H(+). Its function is as follows. Specifically dimethylates two adjacent adenosines (A1518 and A1519) in the loop of a conserved hairpin near the 3'-end of 16S rRNA in the 30S particle. May play a critical role in biogenesis of 30S subunits. This chain is Ribosomal RNA small subunit methyltransferase A, found in Francisella tularensis subsp. tularensis (strain FSC 198).